The following is a 1023-amino-acid chain: MDAQIEKAIEIAWDPRSDPNLKEQAVQYLTQVRGDTSSLQACLNLFTRAPKAAEVVRLVSLDIVNNAIQTQHIDDQSLRGLKEQLHDYVRRTYASGNEVDPPALQNKLTQTLTFLFSSLYKEGWESFIRDFLSFAGHQNGSVDNLSGVVLYLRLLSSIHDEIADLMIARAGEETKRNVELKDLVRARDVHTVAASFQQILTYWQGNNDAIVEMTLKVIGKWVSWIDISLVVNQDILNLLFPLVGRNPNGGEDKVKDAAIDCFTEIVAKKMKPSDKIGMILFLNLGEVVSQLISSPALHDLRNTSSYDTDLAEAVAKLVNNVVSDLVKILEDAKVEPDVRAQAEQLLQTFLPLLLRFFSDEYDEICATVIPSLTELNTFLRKAQPLPPAYSAMLTPILNAIIQKMRYDDTSSYADEDELTDEAEFQELRKRLQVLQKTIAAVDEALYVDVLSNVIGSTFQRLDEQNGQIDWRDLDLALHEMYLFGELTLVNGGLYAKSQPSSIAAERLIVMMSKMVESGIASFNHPAISLQYMEICVRYCSFFENQTQYIPQVLEQFVSFVHHSHSRVRIRSWYLFHRFVKHLRGQVGNVAETIIQSISDLLPLKAEVPRENDDDMSSDDGNHDAADVAFNAQLNLYEAIGCISSTTSTPIEKQAIYARTIMDPLFSDIERNLEQAKSGNAQATLQIHHIIFALGSLAHGFSDWSPGEGKRAGQAPVKEITIEFSRAAEAILFALEALKASFEVRNAARSSFSRLMGVMGVAMLPLLPRWIDGLLSQSSSKEEIAMFLRLLDQVVFGFKKDIHEVLNSLLTPLFQRVFASLSEPVTGTDDGIQLAELRREYLTFVTVILNNELGSVLVSEQNQAFFDPLIQSVTSLAKTVTNENGNLAASKIAFNVMTKMAEIWGGPTIATPGQPITSPVPSQPTFPGFDSFLIERFHPVCWEVLRDPNFRPLVDAQSKSVLNELAGLEQAIYMKTGNMFVEHLQGNFFPSMGVDGSGFIKSMVESPERKGLATFLQNWMKGKA.

This sequence belongs to the exportin family.

Its subcellular location is the nucleus. The protein resides in the cytoplasm. TRNA nucleus export receptor which facilitates tRNA translocation across the nuclear pore complex. Involved in pre-tRNA splicing, probably by affecting the interaction of pre-tRNA with splicing endonuclease. This Botryotinia fuckeliana (strain B05.10) (Noble rot fungus) protein is Exportin-T (los1).